The following is a 592-amino-acid chain: Glutamine--fructose-6-phosphate aminotransferase [isomerizing] (592 aa).

Cysteine 2 acts as the Nucleophile; for GATase activity in catalysis. Residues 2–217 (CGIVGYVGRD…DGEIADLTPD (216 aa)) form the Glutamine amidotransferase type-2 domain. SIS domains lie at 277–416 (IPFK…EREN) and 441–582 (VAEK…VDQP). Residue lysine 587 is the For Fru-6P isomerization activity of the active site.

As to quaternary structure, homodimer.

The protein localises to the cytoplasm. The enzyme catalyses D-fructose 6-phosphate + L-glutamine = D-glucosamine 6-phosphate + L-glutamate. In terms of biological role, catalyzes the first step in hexosamine metabolism, converting fructose-6P into glucosamine-6P using glutamine as a nitrogen source. This is Glutamine--fructose-6-phosphate aminotransferase [isomerizing] from Aquifex aeolicus (strain VF5).